Reading from the N-terminus, the 335-residue chain is Olfactory receptor 52B6 (335 aa).

The Extracellular segment spans residues 1-45 (MAQVRALHKIMALFSANSIGAMNNSDTRIAGCFLTGIPGLEQLHI). N-linked (GlcNAc...) asparagine glycosylation occurs at asparagine 23. The chain crosses the membrane as a helical span at residues 46 to 66 (WLSIPFCIMYITALEGNGILI). Over 67–74 (CVILSQAI) the chain is Cytoplasmic. A helical membrane pass occupies residues 75–95 (LHEPMYIFLSMLASADVLLST). At 96–119 (TTMPKALANLWLGYSLISFDGCLT) the chain is on the extracellular side. Cysteine 117 and cysteine 208 are joined by a disulfide. Residues 120–139 (QMFFIHFLFIHSAVLLAMAF) traverse the membrane as a helical segment. At 140 to 158 (DRYVAICSPLRYVTILTSK) the chain is on the cytoplasmic side. A helical transmembrane segment spans residues 159–179 (VIGKIVTAALSHSFIIMFPSI). Residues 180 to 215 (FLLEHLHYCQINIIAHTFCEHMGIAHLSCSDISINV) lie on the Extracellular side of the membrane. Residues 216-236 (WYGLAAALLSTGLDIMLITVS) traverse the membrane as a helical segment. At 237–256 (YIHILQAVFRLLSQDARSKA) the chain is on the cytoplasmic side. A helical transmembrane segment spans residues 257–277 (LSTCGSHICVILLFYVPALFS). Topologically, residues 278-293 (VFAYRFGGRSVPCYVH) are extracellular. A helical transmembrane segment spans residues 294 to 314 (ILLASLYVVIPPMLNPVIYGV). Over 315–335 (RTKPILEGAKQMFSNLAKGSK) the chain is Cytoplasmic.

This sequence belongs to the G-protein coupled receptor 1 family.

Its subcellular location is the cell membrane. Odorant receptor. The polypeptide is Olfactory receptor 52B6 (OR52B6) (Homo sapiens (Human)).